The primary structure comprises 696 residues: Two-component response regulator ORR22 (696 aa).

The Response regulatory domain occupies 27–142 (RVLAVDDDPV…ELRNIWQHVV (116 aa)). Residue D78 is modified to 4-aspartylphosphate. A disordered region spans residues 154–214 (LDFSKECNKP…DYQENDEPSA (61 aa)). Residues 176-185 (TCGSSDQNGR) show a composition bias toward polar residues. The span at 195 to 211 (GEDDDEGDDNDYQENDE) shows a compositional bias: acidic residues. The myb-like GARP DNA-binding region spans 214–273 (AAKKPRVVWSVELHRKFVAAVNQLGIDKAVPKRILELMNVEKLTRENVASHLQKYRLYLK).

It belongs to the ARR family. Type-B subfamily. Two-component system major event consists of a His-to-Asp phosphorelay between a sensor histidine kinase (HK) and a response regulator (RR). In plants, the His-to-Asp phosphorelay involves an additional intermediate named Histidine-containing phosphotransfer protein (HPt). This multistep phosphorelay consists of a His-Asp-His-Asp sequential transfer of a phosphate group between first a His and an Asp of the HK protein, followed by the transfer to a conserved His of the HPt protein and finally the transfer to an Asp in the receiver domain of the RR protein.

The protein localises to the nucleus. Its function is as follows. Transcriptional activator that binds specific DNA sequence. Functions as a response regulator involved in His-to-Asp phosphorelay signal transduction system. Phosphorylation of the Asp residue in the receiver domain activates the ability of the protein to promote the transcription of target genes. May directly activate some type-A response regulators in response to cytokinins. Functions as a response regulator in response to cytokinins. The polypeptide is Two-component response regulator ORR22 (Oryza sativa subsp. japonica (Rice)).